We begin with the raw amino-acid sequence, 311 residues long: tRNA-cytidine(32) 2-sulfurtransferase (311 aa).

The PP-loop motif signature appears at 47–52; the sequence is SGGKDS. Residues Cys122, Cys125, and Cys213 each coordinate [4Fe-4S] cluster.

It belongs to the TtcA family. In terms of assembly, homodimer. Requires Mg(2+) as cofactor. [4Fe-4S] cluster serves as cofactor.

The protein localises to the cytoplasm. The catalysed reaction is cytidine(32) in tRNA + S-sulfanyl-L-cysteinyl-[cysteine desulfurase] + AH2 + ATP = 2-thiocytidine(32) in tRNA + L-cysteinyl-[cysteine desulfurase] + A + AMP + diphosphate + H(+). It participates in tRNA modification. Catalyzes the ATP-dependent 2-thiolation of cytidine in position 32 of tRNA, to form 2-thiocytidine (s(2)C32). The sulfur atoms are provided by the cysteine/cysteine desulfurase (IscS) system. This Shigella boydii serotype 18 (strain CDC 3083-94 / BS512) protein is tRNA-cytidine(32) 2-sulfurtransferase.